Consider the following 230-residue polypeptide: Ribonuclease HII (230 aa).

In terms of domain architecture, RNase H type-2 spans Met-1 to Gln-224. Residues Asp-7, Glu-8, and Asp-112 each contribute to the a divalent metal cation site.

This sequence belongs to the RNase HII family. It depends on Mn(2+) as a cofactor. Requires Mg(2+) as cofactor.

It localises to the cytoplasm. It carries out the reaction Endonucleolytic cleavage to 5'-phosphomonoester.. Its function is as follows. Endonuclease that specifically degrades the RNA of RNA-DNA hybrids. This is Ribonuclease HII (rnhB) from Methanocaldococcus jannaschii (strain ATCC 43067 / DSM 2661 / JAL-1 / JCM 10045 / NBRC 100440) (Methanococcus jannaschii).